The chain runs to 430 residues: MSQYQAVKGTRDIFPEEAAQWKHVEEVVHTLASLYGFSEVRTPVFEYTELFQRGIGATTDIVGKEMFTFLPDPGGRSLTLRPEMTAGVMRAALQRNLLSQAPVHKLYYISELFRKERPQAGRQRQFSQFGAELLGVSSPAAVAEVLTFMMQVFETLGLSGLRLRINTLGDLEDRARYREALRSYFQPYEGELDESSKERLEKNPLRILDSKNPALRDMITGAPRLFDFVKAEGVREFEAVLRFLADRGIDYDVDHLLVRGLDYYCHTAFEVQSTALGAQDAIGGGGRYDGLAKELGGGKEMPAVGFAVGMERLLIAMEKQGLFATLNPHGPLVYVVVQQSELADHGMQVAFKLRRSGISTEIDLAARSMKAQMREANRIRSGYALFVGQSELESGQYALKNLVTSEQTTLELQAIIEILREPSIREGLKA.

It belongs to the class-II aminoacyl-tRNA synthetase family. As to quaternary structure, homodimer.

It localises to the cytoplasm. The enzyme catalyses tRNA(His) + L-histidine + ATP = L-histidyl-tRNA(His) + AMP + diphosphate + H(+). This Chlorobium luteolum (strain DSM 273 / BCRC 81028 / 2530) (Pelodictyon luteolum) protein is Histidine--tRNA ligase.